The sequence spans 453 residues: MAGAGGGGCPTGGNDFQWCFSQVKGAVDEDVAEADIISTVEFNYSGDLLATGDKGGRVVIFQREQENKGRAHSRGEYNVYSTFQSHEPEFDYLKSLEIEEKINKIRWLPQQNAAHFLLSTNDKTIKLWKISERDKRAEGYNLKDEDGRLRDPFRITALRVPILKPMDLMVEASPRRIFANAHTYHINSISVNSDHETYLSADDLRINLWHLEITDRSFNIVDIKPANMEELTEVITAAEFHPHQCNVFVYSSSKGTIRLCDMRSSALCDRHAKFFEEPEDPSSRSFFSEIISSISDVKFSHSGRYMMTRDYLSVKVWDLNMEGRPVETHHVHEYLRSKLCSLYENDCIFDKFECCWNGSDSAIMTGSYNNFFRMFDRNTRRDVTLEASRENSKPRASLKPRKVCSGGKRKKDEISVDSLDFNKKILHTAWHPMESIIAVAATNNLYIFQDKIN.

WD repeat units lie at residues 32–71 (AEAD…KGRA), 97–138 (EIEE…KRAE), 181–219 (AHTY…RSFN), and 230–270 (ELTE…LCDR). The residue at position 285 (serine 285) is a Phosphoserine. WD repeat units follow at residues 289-327 (EIIS…RPVE), 344-385 (ENDC…DVTL), and 420-452 (DFNK…QDKI). A Phosphotyrosine modification is found at tyrosine 305. A Phosphothreonine modification is found at threonine 308. The tract at residues 385–406 (LEASRENSKPRASLKPRKVCSG) is disordered.

This sequence belongs to the phosphatase 2A regulatory subunit B family. PP2A consists of a common heterodimeric core enzyme, composed of a 36 kDa catalytic subunit (subunit C) and a 65 kDa constant regulatory subunit (PR65 or subunit A), that associates with a variety of regulatory subunits. Proteins that associate with the core dimer include three families of regulatory subunits B (the R2/B/PR55/B55, R3/B''/PR72/PR130/PR59 and R5/B'/B56 families), the 48 kDa variable regulatory subunit, viral proteins, and cell signaling molecules. Interacts with ENSA (when phosphorylated at 'Ser-67') and ARPP19 (when phosphorylated at 'Ser-62'), leading to inhibit PP2A activity. Interacts with IER5. Widely expressed with high levels in brain, heart, placenta, skeletal muscle, testis, thymus and spleen.

It is found in the cytoplasm. Its function is as follows. Substrate-recognition subunit of protein phosphatase 2A (PP2A) that plays a key role in cell cycle by controlling mitosis entry and exit. Involved in chromosome clustering during late mitosis by mediating dephosphorylation of MKI67. The activity of PP2A complexes containing PPP2R2D (PR55-delta) fluctuate during the cell cycle: the activity is high in interphase and low in mitosis. This chain is Serine/threonine-protein phosphatase 2A 55 kDa regulatory subunit B delta isoform (Ppp2r2d), found in Rattus norvegicus (Rat).